The primary structure comprises 89 residues: Small ribosomal subunit protein bS20 (89 aa).

This sequence belongs to the bacterial ribosomal protein bS20 family.

Binds directly to 16S ribosomal RNA. The polypeptide is Small ribosomal subunit protein bS20 (Wolbachia sp. subsp. Drosophila simulans (strain wRi)).